Reading from the N-terminus, the 131-residue chain is Protein Turandot M (131 aa).

Residues 1–23 form the signal peptide; the sequence is MNPTVYLSCLVVFSLFYLGKAQA.

This sequence belongs to the Turandot family.

It localises to the secreted. Functionally, a humoral factor that may play a role in stress tolerance. Requires Mekk1 expression in the fat body to regulate response to septic injury and consequent immune response. This Drosophila yakuba (Fruit fly) protein is Protein Turandot M.